Here is a 130-residue protein sequence, read N- to C-terminus: Small ribosomal subunit protein uS9 (130 aa).

This sequence belongs to the universal ribosomal protein uS9 family.

The protein is Small ribosomal subunit protein uS9 of Brevibacillus brevis (strain 47 / JCM 6285 / NBRC 100599).